Here is a 22-residue protein sequence, read N- to C-terminus: Myofibril-bound serine protease (22 aa).

The Peptidase S1 domain occupies 1 to 22; sequence IVGGYECEAYSKPYQVSINLGY.

It belongs to the peptidase S1 family. Detected in skeletal muscle (at protein level).

It localises to the cytoplasm. Functionally, serine protease which degrades the myosin heavy chain and tropomyosin, but not actin. Selectively cleaves Arg-|-Xaa bonds. The sequence is that of Myofibril-bound serine protease from Saurida undosquamis (Brushtooth lizardfish).